Here is a 486-residue protein sequence, read N- to C-terminus: Glutamyl-tRNA(Gln) amidotransferase subunit A (486 aa).

Residues Lys-79 and Ser-154 each act as charge relay system in the active site. Catalysis depends on Ser-178, which acts as the Acyl-ester intermediate.

This sequence belongs to the amidase family. GatA subfamily. In terms of assembly, heterotrimer of A, B and C subunits.

The catalysed reaction is L-glutamyl-tRNA(Gln) + L-glutamine + ATP + H2O = L-glutaminyl-tRNA(Gln) + L-glutamate + ADP + phosphate + H(+). Its function is as follows. Allows the formation of correctly charged Gln-tRNA(Gln) through the transamidation of misacylated Glu-tRNA(Gln) in organisms which lack glutaminyl-tRNA synthetase. The reaction takes place in the presence of glutamine and ATP through an activated gamma-phospho-Glu-tRNA(Gln). The chain is Glutamyl-tRNA(Gln) amidotransferase subunit A from Dehalococcoides mccartyi (strain CBDB1).